A 370-amino-acid polypeptide reads, in one-letter code: Prolactin-releasing peptide receptor (370 aa).

At 1 to 62 the chain is on the extracellular side; sequence MASSTTRGPR…LQLVHQLKGL (62 aa). N-linked (GlcNAc...) asparagine glycans are attached at residues asparagine 27 and asparagine 36. The helical transmembrane segment at 63–83 threads the bilayer; the sequence is IVLLYSVVVVVGLVGNCLLVL. Topologically, residues 84–101 are cytoplasmic; that stretch reads VIARVRRLHNVTNFLIGN. A helical transmembrane segment spans residues 102–122; that stretch reads LALSDVLMCTACVPLTLAYAF. At 123 to 126 the chain is on the extracellular side; the sequence is EPRG. The helical transmembrane segment at 127–147 threads the bilayer; it reads WVFGGGLCHLVFFLQPVTVYV. An intrachain disulfide couples cysteine 134 to cysteine 211. At 148-175 the chain is on the cytoplasmic side; it reads SVFTLTTIAVDRYVVLVHPLRRRISLRL. Residues 176–196 form a helical membrane-spanning segment; sequence SAYAVLAIWALSAVLALPAAV. Residues 197 to 225 are Extracellular-facing; the sequence is HTYHVELKPHDVRLCEEFWGSQERQRQLY. The helical transmembrane segment at 226-246 threads the bilayer; the sequence is AWGLLLVTYLLPLLVILLSYV. Over 247 to 276 the chain is Cytoplasmic; that stretch reads RVSVKLRNRVVPGCVTQSQADWDRARRRRT. Residues 277 to 297 form a helical membrane-spanning segment; that stretch reads FCLLVVIVVVFAVCWLPLHVF. Residues 298 to 317 lie on the Extracellular side of the membrane; the sequence is NLLRDLDPHAIDPYAFGLVQ. A helical transmembrane segment spans residues 318-338; it reads LLCHWLAMSSACYNPFIYAWL. Residues 339 to 369 lie on the Cytoplasmic side of the membrane; it reads HDSFREELRKLLVAWPRKIAPHGQNMTVSVV. The interval 365-370 is required for interaction with GRIP1, GRIP2 and PICK1; it reads TVSVVI.

It belongs to the G-protein coupled receptor 1 family. Interacts through its C-terminal region with the PDZ domain-containing proteins GRIP1, GRIP2 and PICK1. Interacts with PDZ domains 4 and 5 of GRIP1 and with the PDZ domain of PICK1. As to expression, only detected in the pituitary gland and in all cell types of pituitary adenomas.

The protein localises to the cell membrane. Functionally, receptor for prolactin-releasing peptide (PrRP). Implicated in lactation, regulation of food intake and pain-signal processing. This chain is Prolactin-releasing peptide receptor (PRLHR), found in Homo sapiens (Human).